Reading from the N-terminus, the 985-residue chain is UPF0182 protein cgR_0895 (985 aa).

The next 7 membrane-spanning stretches (helical) occupy residues valine 19–phenylalanine 39, isoleucine 63–phenylalanine 83, valine 115–tryptophan 135, serine 176–isoleucine 196, threonine 215–aspartate 235, lysine 262–leucine 282, and leucine 290–leucine 310. The tract at residues alanine 906–glutamate 944 is disordered. The segment covering aspartate 929–proline 939 has biased composition (low complexity).

Belongs to the UPF0182 family.

It is found in the cell membrane. The sequence is that of UPF0182 protein cgR_0895 from Corynebacterium glutamicum (strain R).